The following is a 225-amino-acid chain: Octanoyltransferase (225 aa).

The BPL/LPL catalytic domain occupies 37–217 (SDTPDEFWVV…ELASLIGYQT (181 aa)). Substrate contacts are provided by residues 76-83 (RGGQVTYH), 148-150 (SLG), and 161-163 (GLA). The active-site Acyl-thioester intermediate is C179.

Belongs to the LipB family.

The protein localises to the cytoplasm. The enzyme catalyses octanoyl-[ACP] + L-lysyl-[protein] = N(6)-octanoyl-L-lysyl-[protein] + holo-[ACP] + H(+). It functions in the pathway protein modification; protein lipoylation via endogenous pathway; protein N(6)-(lipoyl)lysine from octanoyl-[acyl-carrier-protein]: step 1/2. In terms of biological role, catalyzes the transfer of endogenously produced octanoic acid from octanoyl-acyl-carrier-protein onto the lipoyl domains of lipoate-dependent enzymes. Lipoyl-ACP can also act as a substrate although octanoyl-ACP is likely to be the physiological substrate. In Aeromonas salmonicida (strain A449), this protein is Octanoyltransferase.